The primary structure comprises 838 residues: Probable inorganic carbon transporter subunit DabA (838 aa).

The Zn(2+) site is built by cysteine 353, aspartate 355, histidine 537, and cysteine 552.

The protein belongs to the inorganic carbon transporter (TC 9.A.2) DabA family. Forms a complex with DabB. Zn(2+) serves as cofactor.

Its subcellular location is the cell membrane. Functionally, part of an energy-coupled inorganic carbon pump. The polypeptide is Probable inorganic carbon transporter subunit DabA (Chloroflexus aurantiacus (strain ATCC 29366 / DSM 635 / J-10-fl)).